Reading from the N-terminus, the 199-residue chain is Glycerol-3-phosphate acyltransferase (199 aa).

Transmembrane regions (helical) follow at residues 4 to 24, 56 to 76, 80 to 100, 115 to 135, and 154 to 176; these read FALF…AILI, LAVL…GYYL, QFEL…PIFF, IAPI…FVFL, and YVWW…LIYR.

This sequence belongs to the PlsY family. In terms of assembly, probably interacts with PlsX.

Its subcellular location is the cell inner membrane. It catalyses the reaction an acyl phosphate + sn-glycerol 3-phosphate = a 1-acyl-sn-glycero-3-phosphate + phosphate. The protein operates within lipid metabolism; phospholipid metabolism. In terms of biological role, catalyzes the transfer of an acyl group from acyl-phosphate (acyl-PO(4)) to glycerol-3-phosphate (G3P) to form lysophosphatidic acid (LPA). This enzyme utilizes acyl-phosphate as fatty acyl donor, but not acyl-CoA or acyl-ACP. The sequence is that of Glycerol-3-phosphate acyltransferase from Haemophilus influenzae (strain PittEE).